A 218-amino-acid chain; its full sequence is Adenylate kinase (218 aa).

Position 10-15 (10-15 (GAGKGT)) interacts with ATP. Positions 30-59 (STGDMLRAAVKAGTPLGIAAKKIMDEGGLV) are NMP. Residues Thr-31, Arg-36, 57–59 (GLV), 85–88 (GFPR), and Gln-92 each bind AMP. Positions 122–159 (GRRVHPASGRTYHVKFNPPKVAGRDDVTGEELIQRDDD) are LID. ATP contacts are provided by residues Arg-123 and 132-133 (TY). Residues Arg-156 and Arg-167 each coordinate AMP. Gly-203 is an ATP binding site.

The protein belongs to the adenylate kinase family. In terms of assembly, monomer.

It is found in the cytoplasm. It catalyses the reaction AMP + ATP = 2 ADP. It functions in the pathway purine metabolism; AMP biosynthesis via salvage pathway; AMP from ADP: step 1/1. In terms of biological role, catalyzes the reversible transfer of the terminal phosphate group between ATP and AMP. Plays an important role in cellular energy homeostasis and in adenine nucleotide metabolism. The polypeptide is Adenylate kinase (Herminiimonas arsenicoxydans).